Consider the following 202-residue polypeptide: Small ribosomal subunit protein uS4 (202 aa).

The S4 RNA-binding domain maps to 94–157 (SRLDSLVYRA…LEMPLIKNTL (64 aa)).

Belongs to the universal ribosomal protein uS4 family. In terms of assembly, part of the 30S ribosomal subunit. Contacts protein S5. The interaction surface between S4 and S5 is involved in control of translational fidelity.

Its function is as follows. One of the primary rRNA binding proteins, it binds directly to 16S rRNA where it nucleates assembly of the body of the 30S subunit. Functionally, with S5 and S12 plays an important role in translational accuracy. The polypeptide is Small ribosomal subunit protein uS4 (Ureaplasma urealyticum serovar 10 (strain ATCC 33699 / Western)).